Consider the following 381-residue polypeptide: Chorismate synthase (381 aa).

The NADP(+) site is built by Arg-41 and Arg-47. Residues 127 to 129 (RAS), 247 to 248 (QA), Gly-291, 306 to 310 (KPIPT), and Arg-332 each bind FMN.

Belongs to the chorismate synthase family. As to quaternary structure, homotetramer. The cofactor is FMNH2.

The catalysed reaction is 5-O-(1-carboxyvinyl)-3-phosphoshikimate = chorismate + phosphate. Its pathway is metabolic intermediate biosynthesis; chorismate biosynthesis; chorismate from D-erythrose 4-phosphate and phosphoenolpyruvate: step 7/7. Its function is as follows. Catalyzes the anti-1,4-elimination of the C-3 phosphate and the C-6 proR hydrogen from 5-enolpyruvylshikimate-3-phosphate (EPSP) to yield chorismate, which is the branch point compound that serves as the starting substrate for the three terminal pathways of aromatic amino acid biosynthesis. This reaction introduces a second double bond into the aromatic ring system. The chain is Chorismate synthase from Anaeromyxobacter dehalogenans (strain 2CP-1 / ATCC BAA-258).